Here is a 574-residue protein sequence, read N- to C-terminus: K(+)/H(+) antiporter NhaP2 (574 aa).

The next 13 membrane-spanning stretches (helical) occupy residues 6-26 (INSF…LSPM), 30-50 (LGIP…EDGL), 58-78 (YSTA…DGGM), 87-107 (VALW…TSIT), 109-129 (LMAA…GAIV), 173-193 (IAIL…VSFI), 196-216 (FGLG…LVNL), 219-239 (LAEG…YAVS), 242-262 (LGGS…NKPT), 271-291 (VLDG…GLLL), 299-319 (ILLP…PLAV), 335-355 (WFIS…VFPM), and 359-379 (LPGA…SLLI). In terms of domain architecture, RCK C-terminal spans 405–486 (SGVEIYPSSE…LDALSHLFSQ (82 aa)).

Belongs to the monovalent cation:proton antiporter 1 (CPA1) transporter (TC 2.A.36) family. NhaP2 subfamily.

The protein localises to the cell inner membrane. The catalysed reaction is K(+)(in) + H(+)(out) = K(+)(out) + H(+)(in). Functionally, k(+)/H(+) antiporter that extrudes potassium in exchange for external protons and maintains the internal concentration of potassium under toxic levels. The sequence is that of K(+)/H(+) antiporter NhaP2 from Shewanella sp. (strain W3-18-1).